A 195-amino-acid polypeptide reads, in one-letter code: ATP-dependent Clp protease proteolytic subunit (195 aa).

Ser-98 acts as the Nucleophile in catalysis. His-123 is a catalytic residue.

It belongs to the peptidase S14 family. In terms of assembly, fourteen ClpP subunits assemble into 2 heptameric rings which stack back to back to give a disk-like structure with a central cavity, resembling the structure of eukaryotic proteasomes.

It localises to the cytoplasm. The catalysed reaction is Hydrolysis of proteins to small peptides in the presence of ATP and magnesium. alpha-casein is the usual test substrate. In the absence of ATP, only oligopeptides shorter than five residues are hydrolyzed (such as succinyl-Leu-Tyr-|-NHMec, and Leu-Tyr-Leu-|-Tyr-Trp, in which cleavage of the -Tyr-|-Leu- and -Tyr-|-Trp bonds also occurs).. Functionally, cleaves peptides in various proteins in a process that requires ATP hydrolysis. Has a chymotrypsin-like activity. Plays a major role in the degradation of misfolded proteins. In Thermodesulfovibrio yellowstonii (strain ATCC 51303 / DSM 11347 / YP87), this protein is ATP-dependent Clp protease proteolytic subunit.